The following is a 169-amino-acid chain: Protein-export protein SecB (169 aa).

This sequence belongs to the SecB family. Homotetramer, a dimer of dimers. One homotetramer interacts with 1 SecA dimer.

It localises to the cytoplasm. In terms of biological role, one of the proteins required for the normal export of preproteins out of the cell cytoplasm. It is a molecular chaperone that binds to a subset of precursor proteins, maintaining them in a translocation-competent state. It also specifically binds to its receptor SecA. The protein is Protein-export protein SecB of Alteromonas mediterranea (strain DSM 17117 / CIP 110805 / LMG 28347 / Deep ecotype).